A 225-amino-acid polypeptide reads, in one-letter code: Immune-associated nucleotide-binding protein 1 (225 aa).

The region spanning 6–214 (CPVTNLLLLG…YTENMHRKIK (209 aa)) is the AIG1-type G domain. Positions 15–22 (GRSENGKS) are G1. 15 to 23 (GRSENGKSS) is a binding site for GTP. The G2 stretch occupies residues 42-46 (DMDQR). The G3 stretch occupies residues 64–67 (DTPG). Positions 134 to 137 (TGGD) are G4. The G5 stretch occupies residues 173 to 175 (NNK). Asn174 serves as a coordination point for GTP.

This sequence belongs to the TRAFAC class TrmE-Era-EngA-EngB-Septin-like GTPase superfamily. AIG1/Toc34/Toc159-like paraseptin GTPase family. IAN subfamily. Mostly expressed in pollen.

This Arabidopsis thaliana (Mouse-ear cress) protein is Immune-associated nucleotide-binding protein 1.